A 582-amino-acid chain; its full sequence is ATP-dependent lipid A-core flippase (582 aa).

6 consecutive transmembrane segments (helical) span residues 27 to 48 (LVVS…ISLL), 63 to 85 (FLRI…GFAS), 144 to 168 (VSIV…WQLS), 170 to 188 (VLIV…VSKR), 244 to 266 (LVSA…LFAV), and 283 to 302 (TFTV…KALT). The region spanning 28–310 (VVSTIALVIN…LTSVTSEFQR (283 aa)) is the ABC transmembrane type-1 domain. The region spanning 342-578 (VDVKDVTFTY…DGAYAQLHRI (237 aa)) is the ABC transporter domain. 376 to 383 (GRSGSGKS) contributes to the ATP binding site.

Belongs to the ABC transporter superfamily. Lipid exporter (TC 3.A.1.106) family. As to quaternary structure, homodimer.

It is found in the cell inner membrane. It catalyses the reaction ATP + H2O + lipid A-core oligosaccharideSide 1 = ADP + phosphate + lipid A-core oligosaccharideSide 2.. Involved in lipopolysaccharide (LPS) biosynthesis. Translocates lipid A-core from the inner to the outer leaflet of the inner membrane. Transmembrane domains (TMD) form a pore in the inner membrane and the ATP-binding domain (NBD) is responsible for energy generation. Shows ATPase activity. The polypeptide is ATP-dependent lipid A-core flippase (Vibrio cholerae serotype O1 (strain ATCC 39315 / El Tor Inaba N16961)).